A 160-amino-acid polypeptide reads, in one-letter code: SsrA-binding protein (160 aa).

The segment at 136–160 (KRDTVRERDSNRELQRAVRNKGKED) is disordered.

It belongs to the SmpB family.

The protein resides in the cytoplasm. Functionally, required for rescue of stalled ribosomes mediated by trans-translation. Binds to transfer-messenger RNA (tmRNA), required for stable association of tmRNA with ribosomes. tmRNA and SmpB together mimic tRNA shape, replacing the anticodon stem-loop with SmpB. tmRNA is encoded by the ssrA gene; the 2 termini fold to resemble tRNA(Ala) and it encodes a 'tag peptide', a short internal open reading frame. During trans-translation Ala-aminoacylated tmRNA acts like a tRNA, entering the A-site of stalled ribosomes, displacing the stalled mRNA. The ribosome then switches to translate the ORF on the tmRNA; the nascent peptide is terminated with the 'tag peptide' encoded by the tmRNA and targeted for degradation. The ribosome is freed to recommence translation, which seems to be the essential function of trans-translation. This chain is SsrA-binding protein, found in Pseudomonas putida (strain W619).